A 365-amino-acid polypeptide reads, in one-letter code: uncharacterized protein (365 aa).

One can recognise a Radical SAM core domain in the interval 45-289 (FSIGKSLTII…LKEVKKSNPK (245 aa)). 3 residues coordinate [4Fe-4S] cluster: C60, C68, and C71.

The cofactor is [4Fe-4S] cluster.

This is an uncharacterized protein from Methanocaldococcus jannaschii (strain ATCC 43067 / DSM 2661 / JAL-1 / JCM 10045 / NBRC 100440) (Methanococcus jannaschii).